The following is a 228-amino-acid chain: Ribonuclease 3 1 (228 aa).

The 124-residue stretch at 1–124 folds into the RNase III domain; it reads MYKLLMFRDD…VIGAYYLDNN (124 aa). Residue Glu-37 coordinates Mg(2+). Residue Asp-41 is part of the active site. The Mg(2+) site is built by Ser-110 and Glu-113. The active site involves Glu-113. Positions 153–223 constitute a DRBM domain; that stretch reads DSKNRFQEWV…AENALANLNK (71 aa).

The protein belongs to the ribonuclease III family. In terms of assembly, homodimer. It depends on Mg(2+) as a cofactor.

The protein localises to the cytoplasm. The catalysed reaction is Endonucleolytic cleavage to 5'-phosphomonoester.. Functionally, digests double-stranded RNA. Involved in the processing of primary rRNA transcript to yield the immediate precursors to the large and small rRNAs (23S and 16S). Processes some mRNAs, and tRNAs when they are encoded in the rRNA operon. Processes pre-crRNA and tracrRNA of type II CRISPR loci if present in the organism. The polypeptide is Ribonuclease 3 1 (Nostoc sp. (strain PCC 7120 / SAG 25.82 / UTEX 2576)).